An 88-amino-acid chain; its full sequence is Sec-independent protein translocase protein TatA (88 aa).

The helical transmembrane segment at 1–21 (MGSIGWAQLLIIAVIVVLLFG) threads the bilayer. The interval 41–88 (KAMGDDSQTPPTNVDKTSNDADFAKSITEKQQPVAKAEESKSHEKEQG) is disordered. Residues 46–56 (DSQTPPTNVDK) are compositionally biased toward polar residues. Basic and acidic residues predominate over residues 76 to 88 (KAEESKSHEKEQG).

Belongs to the TatA/E family. As to quaternary structure, the Tat system comprises two distinct complexes: a TatABC complex, containing multiple copies of TatA, TatB and TatC subunits, and a separate TatA complex, containing only TatA subunits. Substrates initially bind to the TatABC complex, which probably triggers association of the separate TatA complex to form the active translocon.

It localises to the cell inner membrane. Its function is as follows. Part of the twin-arginine translocation (Tat) system that transports large folded proteins containing a characteristic twin-arginine motif in their signal peptide across membranes. TatA could form the protein-conducting channel of the Tat system. The polypeptide is Sec-independent protein translocase protein TatA (Yersinia pestis).